The primary structure comprises 340 residues: HPr kinase/phosphorylase (340 aa).

Catalysis depends on residues His-153 and Lys-174. 168 to 175 is a binding site for ATP; that stretch reads GRSGIGKS. Position 175 (Ser-175) interacts with Mg(2+). Asp-192 acts as the Proton acceptor; for phosphorylation activity. Proton donor; for dephosphorylation activity in catalysis. An important for the catalytic mechanism of both phosphorylation and dephosphorylation region spans residues 216–225; it reads MEIRGLGIID. Glu-217 serves as a coordination point for Mg(2+). Arg-258 is an active-site residue. An important for the catalytic mechanism of dephosphorylation region spans residues 279-284; it reads PIYPGK.

This sequence belongs to the HPrK/P family. As to quaternary structure, homohexamer. Requires Mg(2+) as cofactor.

It carries out the reaction [HPr protein]-L-serine + ATP = [HPr protein]-O-phospho-L-serine + ADP + H(+). The catalysed reaction is [HPr protein]-O-phospho-L-serine + phosphate + H(+) = [HPr protein]-L-serine + diphosphate. In terms of biological role, catalyzes the ATP- as well as the pyrophosphate-dependent phosphorylation of a specific serine residue in HPr, a phosphocarrier protein of the phosphoenolpyruvate-dependent sugar phosphotransferase system (PTS). HprK/P also catalyzes the pyrophosphate-producing, inorganic phosphate-dependent dephosphorylation (phosphorolysis) of seryl-phosphorylated HPr (P-Ser-HPr). This chain is HPr kinase/phosphorylase, found in Chloroherpeton thalassium (strain ATCC 35110 / GB-78).